A 24-amino-acid chain; its full sequence is Homotarsinin (24 aa).

Arginine 24 bears the Arginine amide mark.

Homodimer; disulfide-linked. As to expression, expressed by the skin glands.

The protein resides in the secreted. Functionally, antimicrobial peptide. Active against Gram-negative bacteria E.coli ATCC 25922 (MIC=1.5 uM) and P.aeruginosa ATTC 27853 (MIC=23.2 uM) and against Gram-positive bacterium S.aureus ATCC 29313 (MIC=11.6 uM). Has no hemolytic activity. Associates with and disrupts membranes in vitro. The chain is Homotarsinin from Phyllomedusa tarsius (Brownbelly leaf frog).